Here is a 237-residue protein sequence, read N- to C-terminus: Uridylate kinase (237 aa).

ATP is bound at residue lysine 11–glycine 14. Glycine 53 lines the UMP pocket. ATP contacts are provided by glycine 54 and arginine 58. UMP-binding positions include aspartate 73 and threonine 134–threonine 141. ATP contacts are provided by threonine 161, tyrosine 167, and aspartate 170.

The protein belongs to the UMP kinase family. Homohexamer.

It is found in the cytoplasm. It carries out the reaction UMP + ATP = UDP + ADP. Its pathway is pyrimidine metabolism; CTP biosynthesis via de novo pathway; UDP from UMP (UMPK route): step 1/1. Inhibited by UTP. Functionally, catalyzes the reversible phosphorylation of UMP to UDP. The chain is Uridylate kinase from Burkholderia thailandensis (strain ATCC 700388 / DSM 13276 / CCUG 48851 / CIP 106301 / E264).